The following is a 593-amino-acid chain: Insulin-like growth factor 2 mRNA-binding protein 3-B (593 aa).

RRM domains are found at residues 2–75 (NKLY…HSVP) and 81–156 (RKLQ…YIPD). Positions 159-208 (ATPQSPSQQLQQPQQQHPQGRRGFGQRGPARQGSPGAAARPKPQSEVPLR) are disordered. Residues 161–176 (PQSPSQQLQQPQQQHP) are compositionally biased toward low complexity. 2 consecutive KH domains span residues 204–269 (EVPL…CKII) and 285–352 (EIPL…EEEV). Over residues 390-402 (SGMPPPSAGVSSP) the composition is skewed to low complexity. The segment at 390-412 (SGMPPPSAGVSSPTTSASYPPFG) is disordered. KH domains are found at residues 417-482 (SETV…QGRI) and 499-565 (KLEA…QRKI). The tract at residues 571–593 (QVRRQQQQQQKTAQSGQPQPRRK) is disordered.

The protein belongs to the RRM IMP/VICKZ family. In terms of assembly, homodimer and multimer. Associates with microtubules. Interaction with a translocation machinery protein TRAPA of the endoplasmic reticulum. Component of a mRNP complex, at least composed of DAZAP1, IGF2BP3, STAU and VgRBP60. The mRNP complex with DAZAP1, IGF2BP3, STAU and VgRBP60 is only found in the cytoplasm. Interacts with a hnRNP 1 related RNA transport protein VgRBP60 both in the nucleus (in an RNA-independent manner) and the cytoplasm (in an RNA-dependent manner). Found in a B3 activator complex. As to expression, expressed in oocytes, kidney and pancreas (at protein level). Expressed in oocytes, kidney and pancreas.

It localises to the nucleus. Its subcellular location is the cytoplasm. The protein localises to the endoplasmic reticulum. Functionally, RNA-binding protein that acts as a regulator of mRNA transport and localization. Binds to the RNA sequence motif 5'-UUCAC-3'. Preferentially binds to N6-methyladenosine (m6A)-containing mRNAs and increases their stability. Mediates the specific association of Vg1 RNA to microtubules. May regulate mRNA translation. Binds specifically to the vegetal localization elements (VLE or VgLE) in the 3'-UTR of Vg1 and VegT mRNAs. Binds to the Vg1 and VegT mRNAs in both the nucleus and the cytoplasm. May regulate mRNA translation. Acts as a transcription regulator. Binds to the 5'-[TA]GGTTACT-3' motif within element 3 of the TFIIIA gene promoter. In Xenopus laevis (African clawed frog), this protein is Insulin-like growth factor 2 mRNA-binding protein 3-B (igf2bp3-b).